A 417-amino-acid chain; its full sequence is Oxidoreductase phnG (417 aa).

Residues 16–20, Arg-61, and Asp-317 each bind 6-hydroxy-FAD; that span reads GGSYA.

Belongs to the FAD-dependent oxidoreductase family. It depends on 6-hydroxy-FAD as a cofactor.

It carries out the reaction deoxyherqueinone + NADPH + O2 + H(+) = herqueinone + NADP(+) + H2O. Its pathway is secondary metabolite biosynthesis. Its function is as follows. Oxidoreductase; part of the gene cluster that mediates the biosynthesis of phenalenones such as herqueinone, compounds that have been reported to treat tumors, bacterial infections and/or mycoses, and rheumatic diseases. The non-reducing polyketide synthase phnA synthesizes the heptaketide backbone and cyclizes it into the angular, hemiketal-containing naphtho-gamma-pyrone prephenalenone. The product template (PT) domain of phnA catalyzes only the C4-C9 aldol condensation, which is unprecedented among known PT domains. The transformation of prephenalenone to phenalenones requires an FAD-dependent monooxygenase phnB, which catalyzes the C2 aromatic hydroxylation of prephenalenone and ring opening of the gamma-pyrone ring simultaneously. Subsequent intramolecular deprotonation of C3 phenolic oxygen accelerates phenalenone ring closure to yield the tricyclic phenalenone core with a C2 hydroxylation. The prenyltransferase phnF further catalyzes reverse C-prenylation of phenalenone by direct electrophilic substitution at C6, or possibly via first a forward O-prenylation of a neighboring phenol in phenalenone, followed by a Claisen rearrangement. The hydroalkoxylation enzyme phnH catalyzes the 5-exo-trig cyclization via acid catalysis after the spontaneous deprotonation of 7-OH, which leads to the formation of the dihydrobenzofuran atrovenetin. Atrovenetin is further converted to deoxyherqueinone by the O-methyltransferase phnC which can methylate C2-OH to stabilize the northern portion of the phenalenone core. Finally, the oxidoreductase phnG converts deoxyherqueinone to herqueinone via C6 hydroxylation. This is Oxidoreductase phnG from Penicillium herquei.